Reading from the N-terminus, the 387-residue chain is UDP-N-acetylglucosamine--N-acetylmuramyl-(pentapeptide) pyrophosphoryl-undecaprenol N-acetylglucosamine transferase (387 aa).

Residues 26-28 (TGG), Asn-137, Arg-177, Ser-205, and Gln-306 contribute to the UDP-N-acetyl-alpha-D-glucosamine site.

This sequence belongs to the glycosyltransferase 28 family. MurG subfamily.

It localises to the cell inner membrane. The enzyme catalyses di-trans,octa-cis-undecaprenyl diphospho-N-acetyl-alpha-D-muramoyl-L-alanyl-D-glutamyl-meso-2,6-diaminopimeloyl-D-alanyl-D-alanine + UDP-N-acetyl-alpha-D-glucosamine = di-trans,octa-cis-undecaprenyl diphospho-[N-acetyl-alpha-D-glucosaminyl-(1-&gt;4)]-N-acetyl-alpha-D-muramoyl-L-alanyl-D-glutamyl-meso-2,6-diaminopimeloyl-D-alanyl-D-alanine + UDP + H(+). It participates in cell wall biogenesis; peptidoglycan biosynthesis. Cell wall formation. Catalyzes the transfer of a GlcNAc subunit on undecaprenyl-pyrophosphoryl-MurNAc-pentapeptide (lipid intermediate I) to form undecaprenyl-pyrophosphoryl-MurNAc-(pentapeptide)GlcNAc (lipid intermediate II). In Rhodospirillum rubrum (strain ATCC 11170 / ATH 1.1.1 / DSM 467 / LMG 4362 / NCIMB 8255 / S1), this protein is UDP-N-acetylglucosamine--N-acetylmuramyl-(pentapeptide) pyrophosphoryl-undecaprenol N-acetylglucosamine transferase.